The chain runs to 309 residues: MNTSPKQSGYLKVGNGHEVYFWTAGNPQGKSALYVHGGPGSGTDAGCLKYFDLDTTYVILLDQRGCGQSKAVNPLLHNTTQDLVGDLEALRQHLKLERWTLFGGSWGSTLALVYAITHPQVVEQVFLRALFLGREQDWAEMLLGLGKLFYPYEHQTLLKAIPQACRTDFTKFTNYFYEVLQGNDSALKTQLANAWVKWENTLLSPISYVKDEKAEDANFTFKLALLECHYAKHHSFLKPNFILENVAVLKDKPVHLIHGRFDLVCPLSQALELKRALPTLNLYVTNNAGHSGSDPNNLTTIKHLLKTQL.

One can recognise an AB hydrolase-1 domain in the interval 33–291; that stretch reads LYVHGGPGSG…LYVTNNAGHS (259 aa). Ser105 functions as the Nucleophile in the catalytic mechanism. Residue Asp262 is part of the active site. The Proton donor role is filled by His290.

The protein belongs to the peptidase S33 family.

It localises to the cytoplasm. The catalysed reaction is Release of N-terminal proline from a peptide.. Functionally, specifically catalyzes the removal of N-terminal proline residues from peptides. The chain is Putative proline iminopeptidase (pip) from Mycoplasma pneumoniae (strain ATCC 29342 / M129 / Subtype 1) (Mycoplasmoides pneumoniae).